The sequence spans 162 residues: Large ribosomal subunit protein uL10 (162 aa).

The protein belongs to the universal ribosomal protein uL10 family. In terms of assembly, part of the ribosomal stalk of the 50S ribosomal subunit. The N-terminus interacts with L11 and the large rRNA to form the base of the stalk. The C-terminus forms an elongated spine to which L12 dimers bind in a sequential fashion forming a multimeric L10(L12)X complex.

Functionally, forms part of the ribosomal stalk, playing a central role in the interaction of the ribosome with GTP-bound translation factors. This is Large ribosomal subunit protein uL10 from Borrelia duttonii (strain Ly).